Reading from the N-terminus, the 287-residue chain is 4,4'-diapophytoene synthase (287 aa).

Residues H18–S21, Y41, and R45 contribute to the (2E,6E)-farnesyl diphosphate site. D48 and D52 together coordinate Mg(2+). (2E,6E)-farnesyl diphosphate is bound at residue Q165. A Mg(2+)-binding site is contributed by N168. Residue R171 participates in (2E,6E)-farnesyl diphosphate binding. D172 is a binding site for Mg(2+). A (2E,6E)-farnesyl diphosphate-binding site is contributed by Y248.

It belongs to the phytoene/squalene synthase family. CrtM subfamily. The cofactor is Mg(2+).

It catalyses the reaction 2 (2E,6E)-farnesyl diphosphate = 15-cis-4,4'-diapophytoene + 2 diphosphate. The protein operates within carotenoid biosynthesis; staphyloxanthin biosynthesis; staphyloxanthin from farnesyl diphosphate: step 1/5. Involved in the biosynthesis of the yellow-orange carotenoid staphyloxanthin, which plays a role in the virulence via its protective function against oxidative stress. Catalyzes the head-to-head condensation of two molecules of farnesyl diphosphate (FPP) into the colorless C(30) carotenoid 4,4'-diapophytoene (dehydrosqualene). The chain is 4,4'-diapophytoene synthase from Staphylococcus aureus.